The primary structure comprises 67 residues: uncharacterized protein (67 aa).

This is an uncharacterized protein from Haloarcula hispanica (His1V).